The primary structure comprises 461 residues: Argininosuccinate lyase (461 aa).

The protein belongs to the lyase 1 family. Argininosuccinate lyase subfamily.

It is found in the cytoplasm. It catalyses the reaction 2-(N(omega)-L-arginino)succinate = fumarate + L-arginine. It participates in amino-acid biosynthesis; L-arginine biosynthesis; L-arginine from L-ornithine and carbamoyl phosphate: step 3/3. The sequence is that of Argininosuccinate lyase from Nitrosomonas eutropha (strain DSM 101675 / C91 / Nm57).